Here is a 231-residue protein sequence, read N- to C-terminus: TATA-box-binding protein (231 aa).

A run of 2 repeats spans residues 58 to 134 (LQNI…ARII) and 148 to 225 (IQNI…YPVL).

Belongs to the TBP family. As to quaternary structure, belongs to the TFIID complex together with the TBP-associated factors (TAFs). Binds DNA as monomer.

Its subcellular location is the nucleus. General transcription factor that functions at the core of the DNA-binding multiprotein factor TFIID. Binding of TFIID to the TATA box is the initial transcriptional step of the pre-initiation complex (PIC), playing a role in the activation of eukaryotic genes transcribed by RNA polymerase II. This is TATA-box-binding protein (tbp1) from Schizosaccharomyces pombe (strain 972 / ATCC 24843) (Fission yeast).